The chain runs to 267 residues: Acyl-[acyl-carrier-protein]--UDP-N-acetylglucosamine O-acyltransferase (267 aa).

The protein belongs to the transferase hexapeptide repeat family. LpxA subfamily. In terms of assembly, homotrimer.

It localises to the cytoplasm. It catalyses the reaction a (3R)-hydroxyacyl-[ACP] + UDP-N-acetyl-alpha-D-glucosamine = a UDP-3-O-[(3R)-3-hydroxyacyl]-N-acetyl-alpha-D-glucosamine + holo-[ACP]. Its pathway is glycolipid biosynthesis; lipid IV(A) biosynthesis; lipid IV(A) from (3R)-3-hydroxytetradecanoyl-[acyl-carrier-protein] and UDP-N-acetyl-alpha-D-glucosamine: step 1/6. Its function is as follows. Involved in the biosynthesis of lipid A, a phosphorylated glycolipid that anchors the lipopolysaccharide to the outer membrane of the cell. In Proteus mirabilis (strain HI4320), this protein is Acyl-[acyl-carrier-protein]--UDP-N-acetylglucosamine O-acyltransferase.